The sequence spans 389 residues: GTPase Obg (389 aa).

One can recognise an Obg domain in the interval 1 to 159; sequence MKFVDEAVIK…RELRLELLLL (159 aa). The 174-residue stretch at 160–333 folds into the OBG-type G domain; sequence ADVGMLGLPN…LCYKLADFME (174 aa). GTP contacts are provided by residues 166-173, 191-195, 213-216, 283-286, and 314-316; these read GLPNAGKS, FTTLI, DIPG, NKVD, and SAV. Serine 173 and threonine 193 together coordinate Mg(2+). The segment at 359–389 is disordered; sequence NQGEVITEDDDDDWDDWDDEEDDGHVIYVRE. The segment covering 364–381 has biased composition (acidic residues); the sequence is ITEDDDDDWDDWDDEEDD.

Belongs to the TRAFAC class OBG-HflX-like GTPase superfamily. OBG GTPase family. Monomer. It depends on Mg(2+) as a cofactor.

It localises to the cytoplasm. Its function is as follows. An essential GTPase which binds GTP, GDP and possibly (p)ppGpp with moderate affinity, with high nucleotide exchange rates and a fairly low GTP hydrolysis rate. Plays a role in control of the cell cycle, stress response, ribosome biogenesis and in those bacteria that undergo differentiation, in morphogenesis control. The polypeptide is GTPase Obg (Vibrio vulnificus (strain CMCP6)).